The following is a 639-amino-acid chain: Serine protease HtrA-like (639 aa).

Basic and acidic residues-rich tracts occupy residues 1-13 (MDNDKKHVIPREQ), 21-75 (YFHN…EIHQ), 106-187 (QQLK…KESS), and 195-205 (KSQKIEQKEQK). The disordered stretch occupies residues 1–262 (MDNDKKHVIP…LENEPKNNDT (262 aa)). Positions 206–219 (ASSNETSNKELNSY) are enriched in polar residues. Basic and acidic residues-rich tracts occupy residues 220 to 235 (TKDKNNKVEDNQDLKK) and 245 to 262 (NKLEENEHLENEPKNNDT). Residues 277-297 (IVIVVAIILIVILISAIISTM) form a helical membrane-spanning segment. Residues histidine 374, aspartate 404, and serine 489 each act as charge relay system in the active site. Residues 527-629 (EIAEELEKKG…TLSAKIYREG (103 aa)) enclose the PDZ domain.

This sequence belongs to the peptidase S1C family.

It is found in the cell membrane. The protein is Serine protease HtrA-like of Staphylococcus haemolyticus (strain JCSC1435).